The chain runs to 260 residues: uncharacterized protein (260 aa).

Positions 214-252 (IHQFIETEIERIMEAAKELKAEKKDMTSELNRLLLNTVE) form a coiled coil.

This is an uncharacterized protein from Bacillus subtilis (strain 168).